The sequence spans 661 residues: Arginine--tRNA ligase, cytoplasmic (661 aa).

The interval 1–72 is could be involved in the assembly of the multisynthetase complex; the sequence is MEARVAEAAA…QEEQSKTVKS (72 aa). Residues 201-203, H212, Y385, D389, and Q413 contribute to the L-arginine site; that span reads SPN. The short motif at 202–213 is the 'HIGH' region element; that stretch reads PNIAKEMHVGHL. An interaction with tRNA region spans residues 530-544; the sequence is NTAAYLLYAFTRIRA.

This sequence belongs to the class-I aminoacyl-tRNA synthetase family. In terms of assembly, monomer; also part of a multisubunit complex that groups tRNA ligases for Arg, Asp, Glu, Gln, Ile, Leu, Lys, Met and Pro.

It is found in the cytoplasm. The protein localises to the cytosol. It carries out the reaction tRNA(Arg) + L-arginine + ATP = L-arginyl-tRNA(Arg) + AMP + diphosphate. Functionally, forms part of a macromolecular complex that catalyzes the attachment of specific amino acids to cognate tRNAs during protein synthesis. The sequence is that of Arginine--tRNA ligase, cytoplasmic (RARS1) from Gallus gallus (Chicken).